Here is a 336-residue protein sequence, read N- to C-terminus: Methionine synthase (336 aa).

His-210, Cys-212, Glu-234, and Cys-294 together coordinate Zn(2+).

Belongs to the archaeal MetE family. Requires Zn(2+) as cofactor.

It participates in amino-acid biosynthesis; L-methionine biosynthesis via de novo pathway. Its function is as follows. Catalyzes the transfer of a methyl group to L-homocysteine resulting in methionine formation. The physiological methyl donor is unknown. The sequence is that of Methionine synthase from Thermococcus kodakarensis (strain ATCC BAA-918 / JCM 12380 / KOD1) (Pyrococcus kodakaraensis (strain KOD1)).